The sequence spans 262 residues: 5'-nucleotidase SurE (262 aa).

Residues Asp-8, Asp-9, Ser-40, and Asn-92 each coordinate a divalent metal cation.

It belongs to the SurE nucleotidase family. A divalent metal cation is required as a cofactor.

The protein resides in the cytoplasm. It catalyses the reaction a ribonucleoside 5'-phosphate + H2O = a ribonucleoside + phosphate. Nucleotidase that shows phosphatase activity on nucleoside 5'-monophosphates. This is 5'-nucleotidase SurE from Xylella fastidiosa (strain 9a5c).